Here is a 138-residue protein sequence, read N- to C-terminus: Small ribosomal subunit protein uS11c (138 aa).

The segment at M1–R23 is disordered. Basic residues predominate over residues G9–R23.

The protein belongs to the universal ribosomal protein uS11 family. Part of the 30S ribosomal subunit.

The protein resides in the plastid. It localises to the chloroplast. This is Small ribosomal subunit protein uS11c from Barbarea verna (Land cress).